The primary structure comprises 370 residues: Queuine tRNA-ribosyltransferase (370 aa).

Catalysis depends on Asp89, which acts as the Proton acceptor. Substrate is bound by residues 89–93 (DSGGF), Asp143, and Gly214. The tract at residues 245–251 (GVGKPED) is RNA binding. Asp264 functions as the Nucleophile in the catalytic mechanism. Residues 269–273 (TRNAR) are RNA binding; important for wobble base 34 recognition. Zn(2+) contacts are provided by Cys302, Cys304, Cys307, and His333.

This sequence belongs to the queuine tRNA-ribosyltransferase family. In terms of assembly, homodimer. Within each dimer, one monomer is responsible for RNA recognition and catalysis, while the other monomer binds to the replacement base PreQ1. Zn(2+) is required as a cofactor.

The catalysed reaction is 7-aminomethyl-7-carbaguanine + guanosine(34) in tRNA = 7-aminomethyl-7-carbaguanosine(34) in tRNA + guanine. It functions in the pathway tRNA modification; tRNA-queuosine biosynthesis. In terms of biological role, catalyzes the base-exchange of a guanine (G) residue with the queuine precursor 7-aminomethyl-7-deazaguanine (PreQ1) at position 34 (anticodon wobble position) in tRNAs with GU(N) anticodons (tRNA-Asp, -Asn, -His and -Tyr). Catalysis occurs through a double-displacement mechanism. The nucleophile active site attacks the C1' of nucleotide 34 to detach the guanine base from the RNA, forming a covalent enzyme-RNA intermediate. The proton acceptor active site deprotonates the incoming PreQ1, allowing a nucleophilic attack on the C1' of the ribose to form the product. After dissociation, two additional enzymatic reactions on the tRNA convert PreQ1 to queuine (Q), resulting in the hypermodified nucleoside queuosine (7-(((4,5-cis-dihydroxy-2-cyclopenten-1-yl)amino)methyl)-7-deazaguanosine). This Buchnera aphidicola subsp. Acyrthosiphon pisum (strain 5A) protein is Queuine tRNA-ribosyltransferase.